Here is a 902-residue protein sequence, read N- to C-terminus: Chitin synthase 3 (902 aa).

A compositionally biased stretch (basic and acidic residues) spans Met-1 to Arg-15. The disordered stretch occupies residues Met-1–Asp-68. Over residues Asn-19–Gly-30 the composition is skewed to pro residues. Asn-80 carries N-linked (GlcNAc...) asparagine glycosylation. A disordered region spans residues His-104 to Lys-161. Composition is skewed to polar residues over residues Pro-111–Gln-121 and Gln-139–Pro-150. The next 9 helical transmembrane spans lie at Ser-449–Leu-469, Arg-547–Phe-567, Ile-577–Ile-597, Ile-623–Ala-643, Leu-656–Ile-676, Val-699–Leu-719, Leu-731–Cys-751, Val-830–Ala-850, and Val-874–Leu-894.

This sequence belongs to the chitin synthase family. Class II subfamily.

It is found in the cell membrane. The enzyme catalyses [(1-&gt;4)-N-acetyl-beta-D-glucosaminyl](n) + UDP-N-acetyl-alpha-D-glucosamine = [(1-&gt;4)-N-acetyl-beta-D-glucosaminyl](n+1) + UDP + H(+). In terms of biological role, polymerizes chitin, a structural polymer of the cell wall and septum, by transferring the sugar moiety of UDP-GlcNAc to the non-reducing end of the growing chitin polymer. CHS1 and CHS3 have compensatory functions in cell wall modifications in responses to stresses. Might function as a negative regulator on expression of other CHS genes. The polypeptide is Chitin synthase 3 (Pyricularia oryzae (strain 70-15 / ATCC MYA-4617 / FGSC 8958) (Rice blast fungus)).